The sequence spans 207 residues: Large ribosomal subunit protein uL4 (207 aa).

A disordered region spans residues 49–78 (HAVKNRSAVSGGGRKPWRQKGTGRARQGSI).

This sequence belongs to the universal ribosomal protein uL4 family. In terms of assembly, part of the 50S ribosomal subunit.

Functionally, one of the primary rRNA binding proteins, this protein initially binds near the 5'-end of the 23S rRNA. It is important during the early stages of 50S assembly. It makes multiple contacts with different domains of the 23S rRNA in the assembled 50S subunit and ribosome. Its function is as follows. Forms part of the polypeptide exit tunnel. The polypeptide is Large ribosomal subunit protein uL4 (Streptococcus equi subsp. zooepidemicus (strain MGCS10565)).